A 473-amino-acid polypeptide reads, in one-letter code: Vasculin (473 aa).

Disordered regions lie at residues 1 to 25 (MAQHDFAPAWLNFPTPPSSTKSSLN), 46 to 149 (RHNS…REPN), and 191 to 342 (VGNL…QERD). Serine 49 carries the phosphoserine modification. Arginine 87 is subject to Omega-N-methylarginine. Over residues 119-133 (ETGRKEDKRERKQFE) the composition is skewed to basic and acidic residues. 2 stretches are compositionally biased toward polar residues: residues 194–204 (LPSQPVKNGTG) and 251–286 (AFKSTAKNFSPSTNSVKECNRSNSSSPVDKLNQQPR). Phosphoserine occurs at positions 274, 276, 322, and 381. Over residues 293-329 (MRTDKKSEFLKALKRDRVEEEHEDESRAGSEKDDDSF) the composition is skewed to basic and acidic residues. The segment at 444–473 (GPWKNSTFKPTTENDDTETSSSDTSDDDDV) is disordered. The span at 456–473 (ENDDTETSSSDTSDDDDV) shows a compositional bias: acidic residues.

Belongs to the vasculin family. In terms of assembly, interacts with GTF2B, GTF2F2, RNA polymerase II and TBP. As to expression, widely expressed. Some isoforms may be specifically expressed in veins and arteries (at protein level). Isoform 4 is widely expressed. Isoform 1, isoform 2 and isoform 3 may be specifically expressed in vascular smooth muscle cells.

The protein localises to the nucleus. Its subcellular location is the cytoplasm. Functions as a GC-rich promoter-specific transactivating transcription factor. The sequence is that of Vasculin (GPBP1) from Homo sapiens (Human).